The primary structure comprises 368 residues: 4-hydroxy-3-methylbut-2-en-1-yl diphosphate synthase (flavodoxin) (368 aa).

Residues Cys-268, Cys-271, Cys-303, and Glu-310 each contribute to the [4Fe-4S] cluster site.

Belongs to the IspG family. [4Fe-4S] cluster is required as a cofactor.

The catalysed reaction is (2E)-4-hydroxy-3-methylbut-2-enyl diphosphate + oxidized [flavodoxin] + H2O + 2 H(+) = 2-C-methyl-D-erythritol 2,4-cyclic diphosphate + reduced [flavodoxin]. The protein operates within isoprenoid biosynthesis; isopentenyl diphosphate biosynthesis via DXP pathway; isopentenyl diphosphate from 1-deoxy-D-xylulose 5-phosphate: step 5/6. Its function is as follows. Converts 2C-methyl-D-erythritol 2,4-cyclodiphosphate (ME-2,4cPP) into 1-hydroxy-2-methyl-2-(E)-butenyl 4-diphosphate. The protein is 4-hydroxy-3-methylbut-2-en-1-yl diphosphate synthase (flavodoxin) of Listeria monocytogenes serotype 4b (strain CLIP80459).